Consider the following 177-residue polypeptide: MAVANSSPVNPVVFFDVSIGGQEVGRMKIELFADVVPKTAENFRQFCTGEFRKDGVPIGYKGSTFHRVIKDFMIQGGDFVNGDGTGVASIYRGPFADENFKLRHSAPGLLSMANSGPSTNGCQFFITCSKCDWLDGKHVVFGKIIDGLLVMRKIENVPTGPNNKPKLPVVISQCGEM.

Residue alanine 2 is modified to N-acetylalanine. The region spanning 14–176 (FFDVSIGGQE…LPVVISQCGE (163 aa)) is the PPIase cyclophilin-type domain.

This sequence belongs to the cyclophilin-type PPIase family. PPIase H subfamily. As to quaternary structure, interacts directly with PRPF4. Part of a heteromeric complex containing PPIH, PRPF3 and PRPF4 that is stable in the absence of RNA. Component of the U4/U6-U5 tri-snRNP complex composed of the U4, U6 and U5 snRNAs and at least PRPF3, PRPF4, PRPF6, PRPF8, PRPF31, SNRNP200, TXNL4A, SNRNP40, DDX23, CD2BP2, PPIH, SNU13, EFTUD2, SART1 and USP39. Heterodimer with PRPF18.

Its subcellular location is the nucleus speckle. The protein resides in the cytoplasm. The catalysed reaction is [protein]-peptidylproline (omega=180) = [protein]-peptidylproline (omega=0). Its activity is regulated as follows. Inhibited by cyclosporin A. PPIase that catalyzes the cis-trans isomerization of proline imidic peptide bonds in oligopeptides and may therefore assist protein folding. Participates in pre-mRNA splicing. May play a role in the assembly of the U4/U5/U6 tri-snRNP complex, one of the building blocks of the spliceosome. May act as a chaperone. The sequence is that of Peptidyl-prolyl cis-trans isomerase H (PPIH) from Homo sapiens (Human).